The following is a 139-amino-acid chain: Small ribosomal subunit protein uS12 (139 aa).

Asp-102 is modified (3-methylthioaspartic acid).

This sequence belongs to the universal ribosomal protein uS12 family. As to quaternary structure, part of the 30S ribosomal subunit. Contacts proteins S8 and S17. May interact with IF1 in the 30S initiation complex.

In terms of biological role, with S4 and S5 plays an important role in translational accuracy. Its function is as follows. Interacts with and stabilizes bases of the 16S rRNA that are involved in tRNA selection in the A site and with the mRNA backbone. Located at the interface of the 30S and 50S subunits, it traverses the body of the 30S subunit contacting proteins on the other side and probably holding the rRNA structure together. The combined cluster of proteins S8, S12 and S17 appears to hold together the shoulder and platform of the 30S subunit. This Bacillus pumilus (strain SAFR-032) protein is Small ribosomal subunit protein uS12.